Reading from the N-terminus, the 132-residue chain is Mini-ribonuclease 3 (132 aa).

Aspartate 17 is a catalytic residue.

The protein belongs to the MrnC RNase family. In terms of assembly, homodimer. The cofactor is Mg(2+).

It localises to the cytoplasm. Its function is as follows. Involved in correct processing of both the 5' and 3' ends of 23S rRNA precursor. Processes 30S rRNA precursor transcript even in absence of ribonuclease 3 (Rnc); Rnc processes 30S rRNA into smaller rRNA precursors. The chain is Mini-ribonuclease 3 from Enterococcus faecalis (strain ATCC 700802 / V583).